Here is a 335-residue protein sequence, read N- to C-terminus: MEKFKIIKTIPKICGAFIFLLFFTFLFGHYGELKTQASDEYPGNFKITSHNVYLFSRNIYPNWGQMHRADLIAQADYMKNNDVVILNEAFDTSASHRLLNNLREMYPHQTPVIGRSKHGWDKTEGNYSNFALEDGGVAVVSQWPIVEKSQHIFQRGGGADRLSNKGFAYVKIMKNGKPYHIIGTHTPADDSLISKDTSRAIRAEQMQEIQTFIAKKNIPKDEIIFIGGDLNVNYGTDEYHDMFKLLNVSSPANFNGQMATWDPTTNSMLKESYPKAAPEYLDYIFVENGHARPHSWHNKVLHTKSPQWSVKSWFKTYTYQDFSDHYPVVGFTDNN.

Residues Met-1–Gly-28 form the signal peptide.

This sequence belongs to the neutral sphingomyelinase family.

The protein localises to the secreted. The enzyme catalyses a sphingomyelin + H2O = phosphocholine + an N-acylsphing-4-enine + H(+). Functionally, virulence factor that promotes intracellular proliferation by mediating the disruption of the phagocytic vacuole and the release of bacteria into the host cell cytosol. May act in concert with the phospholipases PlcA and PlcB and the hemolysin hly to mediate efficient escape from the vacuole. The protein is Sphingomyelinase C (smcL) of Listeria ivanovii.